The chain runs to 753 residues: 5-methyltetrahydropteroyltriglutamate--homocysteine methyltransferase (753 aa).

5-methyltetrahydropteroyltri-L-glutamate contacts are provided by residues 17-20 (RELK) and K117. Residues 431 to 433 (IGS) and E484 contribute to the L-homocysteine site. Residues 431 to 433 (IGS) and E484 each bind L-methionine. 5-methyltetrahydropteroyltri-L-glutamate-binding positions include 515–516 (RC) and W561. Residue D599 participates in L-homocysteine binding. D599 contributes to the L-methionine binding site. Residue E605 participates in 5-methyltetrahydropteroyltri-L-glutamate binding. The Zn(2+) site is built by H641, C643, and E665. The active-site Proton donor is H694. A Zn(2+)-binding site is contributed by C726.

Belongs to the vitamin-B12 independent methionine synthase family. Zn(2+) is required as a cofactor.

It carries out the reaction 5-methyltetrahydropteroyltri-L-glutamate + L-homocysteine = tetrahydropteroyltri-L-glutamate + L-methionine. Its pathway is amino-acid biosynthesis; L-methionine biosynthesis via de novo pathway; L-methionine from L-homocysteine (MetE route): step 1/1. Its function is as follows. Catalyzes the transfer of a methyl group from 5-methyltetrahydrofolate to homocysteine resulting in methionine formation. This Escherichia coli O7:K1 (strain IAI39 / ExPEC) protein is 5-methyltetrahydropteroyltriglutamate--homocysteine methyltransferase.